Here is a 245-residue protein sequence, read N- to C-terminus: 1-(5-phosphoribosyl)-5-[(5-phosphoribosylamino)methylideneamino] imidazole-4-carboxamide isomerase (245 aa).

Residue Asp-8 is the Proton acceptor of the active site. The active-site Proton donor is Asp-131.

Belongs to the HisA/HisF family.

The protein localises to the cytoplasm. It carries out the reaction 1-(5-phospho-beta-D-ribosyl)-5-[(5-phospho-beta-D-ribosylamino)methylideneamino]imidazole-4-carboxamide = 5-[(5-phospho-1-deoxy-D-ribulos-1-ylimino)methylamino]-1-(5-phospho-beta-D-ribosyl)imidazole-4-carboxamide. Its pathway is amino-acid biosynthesis; L-histidine biosynthesis; L-histidine from 5-phospho-alpha-D-ribose 1-diphosphate: step 4/9. The protein is 1-(5-phosphoribosyl)-5-[(5-phosphoribosylamino)methylideneamino] imidazole-4-carboxamide isomerase of Neisseria meningitidis serogroup C (strain 053442).